A 313-amino-acid chain; its full sequence is 2,3-dihydroxyphenylpropionate/2,3-dihydroxicinnamic acid 1,2-dioxygenase (313 aa).

Histidine 116 functions as the Proton donor in the catalytic mechanism. Histidine 180 functions as the Proton acceptor in the catalytic mechanism.

Belongs to the LigB/MhpB extradiol dioxygenase family. As to quaternary structure, homotetramer. The cofactor is Fe(2+).

The enzyme catalyses 3-(2,3-dihydroxyphenyl)propanoate + O2 = (2Z,4E)-2-hydroxy-6-oxonona-2,4-dienedioate + H(+). The catalysed reaction is (2E)-3-(2,3-dihydroxyphenyl)prop-2-enoate + O2 = (2Z,4E,7E)-2-hydroxy-6-oxonona-2,4,7-trienedioate + H(+). It functions in the pathway aromatic compound metabolism; 3-phenylpropanoate degradation. Functionally, catalyzes the non-heme iron(II)-dependent oxidative cleavage of 2,3-dihydroxyphenylpropionic acid and 2,3-dihydroxicinnamic acid into 2-hydroxy-6-ketononadienedioate and 2-hydroxy-6-ketononatrienedioate, respectively. In Mycobacterium sp. (strain MCS), this protein is 2,3-dihydroxyphenylpropionate/2,3-dihydroxicinnamic acid 1,2-dioxygenase.